The following is a 295-amino-acid chain: Pyridoxal 5'-phosphate synthase subunit PdxS (295 aa).

Aspartate 23 provides a ligand contact to D-ribose 5-phosphate. Lysine 80 serves as the catalytic Schiff-base intermediate with D-ribose 5-phosphate. Glycine 152 serves as a coordination point for D-ribose 5-phosphate. Arginine 164 serves as a coordination point for D-glyceraldehyde 3-phosphate. D-ribose 5-phosphate is bound by residues glycine 213 and 234–235 (GS).

This sequence belongs to the PdxS/SNZ family. In the presence of PdxT, forms a dodecamer of heterodimers.

It carries out the reaction aldehydo-D-ribose 5-phosphate + D-glyceraldehyde 3-phosphate + L-glutamine = pyridoxal 5'-phosphate + L-glutamate + phosphate + 3 H2O + H(+). It functions in the pathway cofactor biosynthesis; pyridoxal 5'-phosphate biosynthesis. Catalyzes the formation of pyridoxal 5'-phosphate from ribose 5-phosphate (RBP), glyceraldehyde 3-phosphate (G3P) and ammonia. The ammonia is provided by the PdxT subunit. Can also use ribulose 5-phosphate and dihydroxyacetone phosphate as substrates, resulting from enzyme-catalyzed isomerization of RBP and G3P, respectively. The chain is Pyridoxal 5'-phosphate synthase subunit PdxS from Methanosphaera stadtmanae (strain ATCC 43021 / DSM 3091 / JCM 11832 / MCB-3).